The sequence spans 443 residues: Probable glutamate dehydrogenase (443 aa).

Lysine 86 is an active-site residue.

It belongs to the Glu/Leu/Phe/Val dehydrogenases family.

It carries out the reaction L-glutamate + NAD(+) + H2O = 2-oxoglutarate + NH4(+) + NADH + H(+). It catalyses the reaction L-glutamate + NADP(+) + H2O = 2-oxoglutarate + NH4(+) + NADPH + H(+). This Sinorhizobium fredii (strain NBRC 101917 / NGR234) protein is Probable glutamate dehydrogenase.